Reading from the N-terminus, the 341-residue chain is UDP-3-O-acylglucosamine N-acyltransferase (341 aa).

Residue His-242 is the Proton acceptor of the active site.

It belongs to the transferase hexapeptide repeat family. LpxD subfamily. In terms of assembly, homotrimer.

The catalysed reaction is a UDP-3-O-[(3R)-3-hydroxyacyl]-alpha-D-glucosamine + a (3R)-hydroxyacyl-[ACP] = a UDP-2-N,3-O-bis[(3R)-3-hydroxyacyl]-alpha-D-glucosamine + holo-[ACP] + H(+). The protein operates within bacterial outer membrane biogenesis; LPS lipid A biosynthesis. In terms of biological role, catalyzes the N-acylation of UDP-3-O-acylglucosamine using 3-hydroxyacyl-ACP as the acyl donor. Is involved in the biosynthesis of lipid A, a phosphorylated glycolipid that anchors the lipopolysaccharide to the outer membrane of the cell. This is UDP-3-O-acylglucosamine N-acyltransferase from Haemophilus influenzae (strain ATCC 51907 / DSM 11121 / KW20 / Rd).